The primary structure comprises 382 residues: Protein arginine N-methyltransferase PRMT10 (382 aa).

The disordered stretch occupies residues 1 to 21 (MASLPNGAASASAASSAAGGG). The segment covering 7–17 (GAASASAASSA) has biased composition (low complexity). The region spanning 28–359 (EVDFANYFCT…KENHRLMDME (332 aa)) is the SAM-dependent MTase PRMT-type domain. Catalysis depends on residues Glu142 and Glu151. The interval 189–229 (ENKMEDLEIAMHDWNLFVEDTESYYGVNMNVLTKAYRAEHE) is dimerization arm.

Belongs to the class I-like SAM-binding methyltransferase superfamily. Protein arginine N-methyltransferase family. Ring-like homodimer.

The enzyme catalyses L-arginyl-[protein] + 2 S-adenosyl-L-methionine = N(omega),N(omega)-dimethyl-L-arginyl-[protein] + 2 S-adenosyl-L-homocysteine + 2 H(+). Functionally, methylates (mono and asymmetric dimethylation) the guanidino nitrogens of arginyl residues in some proteins. The sequence is that of Protein arginine N-methyltransferase PRMT10 (PRMT10) from Oryza sativa subsp. indica (Rice).